The sequence spans 407 residues: Phenazine 1,6-dicarboxylic acid hydroxylase PhzS (407 aa).

FAD-binding residues include Gly-17, Val-134, and Asp-313.

It depends on FAD as a cofactor.

It catalyses the reaction phenazine-1,6-dicarboxylate + NADH + O2 + 2 H(+) = 6-hydroxyphenazine-1-carboxylate + CO2 + NAD(+) + H2O. It carries out the reaction 6-hydroxyphenazine-1-carboxylate + NADH + O2 + 2 H(+) = 1,6-dihydroxyphenazine + CO2 + NAD(+) + H2O. The enzyme catalyses phenazine-1-carboxylate + NADH + O2 + 2 H(+) = 1-hydroxyphenazine + CO2 + NAD(+) + H2O. In terms of biological role, involved in the biosynthesis of phenazine natural products including myxin, an N(5),N(10)-dioxide phenazine antiobiotic, which has antimicrobial activity. Catalyzes the decarboxylative hydroxylations of phenazine 1,6-dicarboxylic acid (PDC) to produce 1,6-dihydroxyphenazine (DHP). Low activity with phenazine 1-carboxylic acid (PCA) to produce 1-hydroxyphenazine. The sequence is that of Phenazine 1,6-dicarboxylic acid hydroxylase PhzS from Lysobacter antibioticus.